Consider the following 182-residue polypeptide: Kappa-casein (182 aa).

The signal sequence occupies residues 1–20; it reads MKSFLLVVNALALTLPFLAV. O-linked (GalNAc...) threonine glycans are attached at residues T133, T143, T148, and T151. A Phosphothreonine; alternate modification is found at T157. O-linked (GalNAc...) threonine; alternate glycosylation occurs at T157. O-linked (GalNAc...) threonine glycans are attached at residues T167, T169, and T178.

It belongs to the kappa-casein family. In terms of assembly, heteromultimers composed of alpha-s1 casein and kappa casein linked by disulfide bonds. In terms of processing, the N-terminus is blocked. In terms of tissue distribution, mammary gland specific. Secreted in milk.

The protein localises to the secreted. In terms of biological role, kappa-casein stabilizes micelle formation, preventing casein precipitation in milk. The polypeptide is Kappa-casein (CSN3) (Homo sapiens (Human)).